The chain runs to 270 residues: Ribitol operon repressor (270 aa).

The HTH lacI-type domain occupies 1–61 (MKKITIYDLA…INRQASMLRS (61 aa)). Positions 6-25 (IYDLAELSGVSASAVSAILN) form a DNA-binding region, H-T-H motif.

Functionally, repressor for the genes of the ribitol operon. Binds D-ribulose as an inducer. The protein is Ribitol operon repressor (rbtR) of Klebsiella aerogenes (Enterobacter aerogenes).